The sequence spans 557 residues: MVLSDIEIANSVTMEPISKVADQLGIDKEALCLYGKYKAKIDARQLVALKNKPDGKLILVTAISPTPAGEGKTTTSVGLVDALSAIGKKAVIALREPSLGPVFGVKGGAAGGGHAQVVPMEDINLHFTGDFHAIGVANNLLAALIDNHIHHGNSLGIDSRRITWKRVVDMNDRQLRHIVDGLQGKVNGIPREDGYDITVASEIMAILCLSENISDLKARLEKIIIGYNYQGEPVTAKDLKAGGALAALLKDAIHPNLVQTLEHTPALIHGGPFANIAHGCNSVLATKLALKYGDYAVTEAGFGADLGAEKFIDIKCRMSGLRPAAVVLVATIRALKMHGGVPKADLATENVQAVVDGLPNLDKHLANIQDVYGLPVVVAINKFPLDTDAELQAVYDACDKRGVDVVISDVWANGGAGGRELAEKVVTLAEQDNQFRFVYEEDDSIETKLTKIVTKVYGGKGINLSSAAKRELADLERLGFGNYPICMAKTQYSFSDDAKKLGAPTDFTVTISNLKVSAGAGFIVALTGAIMTMPGLPKVPASETIDIDEEGNITGLF.

Position 66 to 73 (66 to 73 (TPAGEGKT)) interacts with ATP.

It belongs to the formate--tetrahydrofolate ligase family.

The enzyme catalyses (6S)-5,6,7,8-tetrahydrofolate + formate + ATP = (6R)-10-formyltetrahydrofolate + ADP + phosphate. It participates in one-carbon metabolism; tetrahydrofolate interconversion. This chain is Formate--tetrahydrofolate ligase 2, found in Streptococcus pyogenes serotype M1.